A 413-amino-acid polypeptide reads, in one-letter code: MNTKINSKIRESLNKELKRQQSHIELIASENYVSQAVLELNGSVLTNKYAEGYPGKRYYGGCEFIDEIESLGIQTAKELFHAEHANIQPHSGSQANDAAYKALLEPKDRVVAMGLDAGGHLTHGYPINFSGYTYDFRFYGVNKDTEQLDYQEIEQIVLEHKPKLIVAGASAYSRIIDFKKFKEIADKVGAYLMVDMAHIAGLVAAGVHPNPMEYADIVTTTTHKTLRGARGGLILCKQEFAKKVDSAVFPGSQGGPLENLIAGKTQALLEASTDEFKEYGKQIVKNTKALANVLQENGLRLVAGGSDNHLINVDIKSTLQITGKKAEKILESIGIICNKNMIPFDTEKPFYTSGIRLGTPAMTTRGFKEEEFKQVGLIIVSALKDQSEENLEKLAKQVVSLCEKFPIYQSIKY.

Residues leucine 115 and 119–121 (GHL) each bind (6S)-5,6,7,8-tetrahydrofolate. Lysine 224 is modified (N6-(pyridoxal phosphate)lysine).

Belongs to the SHMT family. Homodimer. The cofactor is pyridoxal 5'-phosphate.

Its subcellular location is the cytoplasm. It carries out the reaction (6R)-5,10-methylene-5,6,7,8-tetrahydrofolate + glycine + H2O = (6S)-5,6,7,8-tetrahydrofolate + L-serine. It functions in the pathway one-carbon metabolism; tetrahydrofolate interconversion. It participates in amino-acid biosynthesis; glycine biosynthesis; glycine from L-serine: step 1/1. Functionally, catalyzes the reversible interconversion of serine and glycine with tetrahydrofolate (THF) serving as the one-carbon carrier. This reaction serves as the major source of one-carbon groups required for the biosynthesis of purines, thymidylate, methionine, and other important biomolecules. Also exhibits THF-independent aldolase activity toward beta-hydroxyamino acids, producing glycine and aldehydes, via a retro-aldol mechanism. This is Serine hydroxymethyltransferase from Mycoplasma capricolum subsp. capricolum (strain California kid / ATCC 27343 / NCTC 10154).